The primary structure comprises 1378 residues: Protein CLASP-1 (1378 aa).

Residues Leu168 to Ile206 form an HEAT 1 repeat. Disordered regions lie at residues Arg231 to Leu254, Ile266 to Ser325, and Met590 to Pro725. Composition is skewed to low complexity over residues Ser269–Thr283 and Asn610–Asn619. Composition is skewed to polar residues over residues Ile620–Ala630 and Ile637–Ile648. Positions Ser664–Ser676 are enriched in low complexity. Polar residues predominate over residues Gly677 to Lys690. A compositionally biased stretch (low complexity) spans Thr704 to Thr721. Residues Ala740–Asp767 are a coiled coil. The span at Ile775 to Pro784 shows a compositional bias: basic and acidic residues. The tract at residues Ile775–Asn823 is disordered. Over residues Ser786 to Arg812 the composition is skewed to polar residues. Residues His1305–Val1341 form an HEAT 2 repeat.

This sequence belongs to the CLASP family.

It localises to the cytoplasm. The protein localises to the cytoskeleton. Its function is as follows. Microtubule plus-end tracking protein that promotes the stabilization of dynamic microtubules. Operates redundantly with cls-2 and cls-3 in regulating microtubule processes which position the spindle during asymmetric cell division. The sequence is that of Protein CLASP-1 (cls-1) from Caenorhabditis elegans.